We begin with the raw amino-acid sequence, 833 residues long: Neurogenic locus protein delta (833 aa).

The N-terminal stretch at 1 to 18 (MHWIKCLLTAFICFTVIV) is a signal peptide. At 19-594 (QVHSSGSFEL…ARADGLTNAQ (576 aa)) the chain is on the extracellular side. 2 disulfide bridges follow: Cys-46/Cys-61 and Cys-68/Cys-82. N-linked (GlcNAc...) asparagine glycosylation is found at Asn-98, Asn-137, and Asn-167. The region spanning 182 to 226 (VTCDLNYYGSGCAKFCRPRDDSFGHSTCSETGEIICLTGWQGDYC) is the DSL domain. 30 disulfide bridges follow: Cys-184-Cys-193, Cys-197-Cys-209, Cys-217-Cys-226, Cys-231-Cys-240, Cys-235-Cys-246, Cys-248-Cys-257, Cys-260-Cys-271, Cys-266-Cys-277, Cys-279-Cys-288, Cys-295-Cys-307, Cys-301-Cys-317, Cys-319-Cys-328, Cys-335-Cys-348, Cys-342-Cys-360, Cys-362-Cys-371, Cys-378-Cys-388, Cys-383-Cys-404, Cys-406-Cys-415, Cys-422-Cys-433, Cys-427-Cys-439, Cys-441-Cys-450, Cys-457-Cys-468, Cys-462-Cys-477, Cys-479-Cys-488, Cys-495-Cys-506, Cys-500-Cys-515, Cys-517-Cys-526, Cys-533-Cys-544, Cys-538-Cys-553, and Cys-555-Cys-564. EGF-like domains follow at residues 227–258 (HIPK…ALCN), 256–289 (LCNE…LYCN), 291–329 (DLNY…DDCE), 331–372 (EIYS…KMCE), 374–416 (KVLT…PNCD), and 418–451 (QLDN…TRCE). In terms of domain architecture, EGF-like 7; calcium-binding spans 453–489 (NIDDCLGHQCENGGTCIDMVNQYRCQCVPGFHGTHCS). The region spanning 491 to 527 (KVDLCLIRPCANGGTCLNLNNDYQCTCRAGFTGKDCS) is the EGF-like 8 domain. Residues 529–565 (DIDECSSGPCHNGGTCMNRVNSFECVCANGFRGKQCD) form the EGF-like 9; calcium-binding domain. A helical membrane pass occupies residues 595–617 (VVLIAVFSVAMPLVAVIAACVVF). Residues 618–833 (CMKRKRKRAQ…RSVVCGTPHM (216 aa)) are Cytoplasmic-facing. Thr-666 carries the post-translational modification Phosphothreonine. The interval 743–773 (QLNTDPTLMHRGSPAGSSAKGASGGGPGAAE) is disordered. Residues 754-763 (GSPAGSSAKG) show a composition bias toward low complexity.

In terms of assembly, interacts with Notch (N) via the EGF repeats and the N EGF repeats. In terms of processing, ubiquitinated by Mib, leading to its endocytosis and subsequent degradation. Detected in all areas with neurogenic abilities, for example the neurogenic ectoderm and the primordia of the sense organs. Later expression is restricted to those cells that have adopted a neural fate.

Its subcellular location is the membrane. Functionally, acts as a ligand for Notch (N) receptor. Essential for proper differentiation of ectoderm. Delta is required for the correct separation of neural and epidermal cell lineages. Fringe (fng) acts in the Golgi to determine the type of O-linked fucose on the EGF modules in N, altering the ability of N to bind with Delta. O-fut1 also has a role in modulating the interaction. The protein is Neurogenic locus protein delta of Drosophila melanogaster (Fruit fly).